A 255-amino-acid polypeptide reads, in one-letter code: Cyclic di-GMP phosphodiesterase PdeH (255 aa).

Positions 13 to 255 (EASIESLQER…ETLNTAVLAL (243 aa)) constitute an EAL domain.

It catalyses the reaction 3',3'-c-di-GMP + H2O = 5'-phosphoguanylyl(3'-&gt;5')guanosine + H(+). Its function is as follows. Involved in the control of the switch from cell motility to adhesion via regulation of cellular levels of cyclic-di-GMP (c-di-GMP). Part of a signaling cascade that regulates curli biosynthesis. The cascade is composed of two c-di-GMP control modules, in which c-di-GMP controlled by the DgcE/PdeH pair (module I) regulates the activity of the DgcM/PdeR pair (module II), which in turn regulates activity of the transcription factor MlrA and expression of the master biofilm regulator csgD. Effect on flagella is controlled via the c-di-GMP-binding flagellar brake protein YcgR. The sequence is that of Cyclic di-GMP phosphodiesterase PdeH from Escherichia coli (strain K12).